Reading from the N-terminus, the 240-residue chain is RNA polymerase sigma factor SigI (240 aa).

Residues 56–69 (DEYSIGLFAFNEAI) carry the Polymerase core binding motif. Positions 194-213 (LKHIEPRVRVSRKTLERHRK) form a DNA-binding region, H-T-H motif.

It belongs to the sigma-70 factor family. SigI subfamily. In terms of assembly, interacts with RsgI.

Its subcellular location is the cytoplasm. Negatively regulated by the anti-sigma-I factor RsgI. In terms of biological role, sigma factors are initiation factors that promote the attachment of RNA polymerase to specific initiation sites and are then released. This sigma factor contributes to both stress response and virulence gene expression. The polypeptide is RNA polymerase sigma factor SigI (Bacillus anthracis).